A 448-amino-acid chain; its full sequence is Glucose-6-phosphate isomerase (448 aa).

The active-site Proton donor is the glutamate 290. Active-site residues include histidine 311 and lysine 425.

This sequence belongs to the GPI family.

Its subcellular location is the cytoplasm. It carries out the reaction alpha-D-glucose 6-phosphate = beta-D-fructose 6-phosphate. It functions in the pathway carbohydrate biosynthesis; gluconeogenesis. It participates in carbohydrate degradation; glycolysis; D-glyceraldehyde 3-phosphate and glycerone phosphate from D-glucose: step 2/4. In terms of biological role, catalyzes the reversible isomerization of glucose-6-phosphate to fructose-6-phosphate. This chain is Glucose-6-phosphate isomerase, found in Oceanobacillus iheyensis (strain DSM 14371 / CIP 107618 / JCM 11309 / KCTC 3954 / HTE831).